Reading from the N-terminus, the 377-residue chain is Chaperone protein DnaJ (377 aa).

A J domain is found at 5 to 70 (DYYEVLGVAK…QKRAAYDRYG (66 aa)). A CR-type zinc finger spans residues 137-215 (GFDTEIRVPS…CDGVGRTRRN (79 aa)). 8 residues coordinate Zn(2+): Cys150, Cys153, Cys167, Cys170, Cys189, Cys192, Cys203, and Cys206. CXXCXGXG motif repeat units lie at residues 150–157 (CDTCHGSG), 167–174 (CRTCGGSG), 189–196 (CPTCHGTG), and 203–210 (CPSCDGVG).

It belongs to the DnaJ family. In terms of assembly, homodimer. The cofactor is Zn(2+).

It is found in the cytoplasm. In terms of biological role, participates actively in the response to hyperosmotic and heat shock by preventing the aggregation of stress-denatured proteins and by disaggregating proteins, also in an autonomous, DnaK-independent fashion. Unfolded proteins bind initially to DnaJ; upon interaction with the DnaJ-bound protein, DnaK hydrolyzes its bound ATP, resulting in the formation of a stable complex. GrpE releases ADP from DnaK; ATP binding to DnaK triggers the release of the substrate protein, thus completing the reaction cycle. Several rounds of ATP-dependent interactions between DnaJ, DnaK and GrpE are required for fully efficient folding. Also involved, together with DnaK and GrpE, in the DNA replication of plasmids through activation of initiation proteins. In Bordetella parapertussis (strain 12822 / ATCC BAA-587 / NCTC 13253), this protein is Chaperone protein DnaJ.